A 329-amino-acid polypeptide reads, in one-letter code: uncharacterized protein (329 aa).

The next 10 helical transmembrane spans lie at 9–29, 53–73, 105–125, 126–146, 154–174, 179–199, 210–230, 240–260, 273–293, and 296–316; these read LMGL…NVIV, SHSF…MALI, FLMF…PTGI, AITL…RLFN, WLVI…AYGG, LVLG…YTVF, VPFT…CLII, WLAI…GHVL, AAII…LAIQ, and LTNI…LLNY. EamA domains lie at 103–169 and 191–316; these read CGFL…LTIP and IVYA…LLNY.

The protein belongs to the EamA transporter family.

The protein resides in the cell membrane. This is an uncharacterized protein from Synechocystis sp. (strain ATCC 27184 / PCC 6803 / Kazusa).